Consider the following 364-residue polypeptide: Dual-specificity RNA methyltransferase RlmN (364 aa).

Catalysis depends on glutamate 91, which acts as the Proton acceptor. Residues 97–333 enclose the Radical SAM core domain; it reads ESDRGTLCIS…VTVRKTRGDD (237 aa). Cysteine 104 and cysteine 338 are oxidised to a cystine. 3 residues coordinate [4Fe-4S] cluster: cysteine 111, cysteine 115, and cysteine 118. S-adenosyl-L-methionine is bound by residues 164–165, serine 196, 218–220, and asparagine 295; these read GE and SLH. Catalysis depends on cysteine 338, which acts as the S-methylcysteine intermediate.

The protein belongs to the radical SAM superfamily. RlmN family. Requires [4Fe-4S] cluster as cofactor.

The protein localises to the cytoplasm. The catalysed reaction is adenosine(2503) in 23S rRNA + 2 reduced [2Fe-2S]-[ferredoxin] + 2 S-adenosyl-L-methionine = 2-methyladenosine(2503) in 23S rRNA + 5'-deoxyadenosine + L-methionine + 2 oxidized [2Fe-2S]-[ferredoxin] + S-adenosyl-L-homocysteine. The enzyme catalyses adenosine(37) in tRNA + 2 reduced [2Fe-2S]-[ferredoxin] + 2 S-adenosyl-L-methionine = 2-methyladenosine(37) in tRNA + 5'-deoxyadenosine + L-methionine + 2 oxidized [2Fe-2S]-[ferredoxin] + S-adenosyl-L-homocysteine. Functionally, specifically methylates position 2 of adenine 2503 in 23S rRNA and position 2 of adenine 37 in tRNAs. m2A2503 modification seems to play a crucial role in the proofreading step occurring at the peptidyl transferase center and thus would serve to optimize ribosomal fidelity. The sequence is that of Dual-specificity RNA methyltransferase RlmN from Neisseria meningitidis serogroup C (strain 053442).